The primary structure comprises 1390 residues: DNA-directed RNA polymerase subunit beta'' (1390 aa).

The Zn(2+) site is built by Cys224, Cys295, Cys302, and Cys305.

It belongs to the RNA polymerase beta' chain family. RpoC2 subfamily. In terms of assembly, in plastids the minimal PEP RNA polymerase catalytic core is composed of four subunits: alpha, beta, beta', and beta''. When a (nuclear-encoded) sigma factor is associated with the core the holoenzyme is formed, which can initiate transcription. The cofactor is Zn(2+).

It is found in the plastid. The protein localises to the chloroplast. It carries out the reaction RNA(n) + a ribonucleoside 5'-triphosphate = RNA(n+1) + diphosphate. Its function is as follows. DNA-dependent RNA polymerase catalyzes the transcription of DNA into RNA using the four ribonucleoside triphosphates as substrates. This is DNA-directed RNA polymerase subunit beta'' from Daucus carota (Wild carrot).